The primary structure comprises 195 residues: Neurensin-1 (195 aa).

2 helical membrane-spanning segments follow: residues 66 to 86 (LISGTVFVILGLTVLAVGFLV) and 120 to 140 (AVLFCIGGTSMAGCLLMSVFV).

Belongs to the VMP family. As to expression, expressed in brain. Not detectable in other tissues tested.

It is found in the membrane. The protein localises to the cell projection. Its subcellular location is the neuron projection. May play an important role in neural organelle transport, and in transduction of nerve signals or in nerve growth. May play a role in neurite extension. May play a role in memory consolidation. The protein is Neurensin-1 of Homo sapiens (Human).